Here is a 338-residue protein sequence, read N- to C-terminus: Inositol 2-dehydrogenase 4 (338 aa).

This sequence belongs to the Gfo/Idh/MocA family. Homotetramer.

It catalyses the reaction myo-inositol + NAD(+) = scyllo-inosose + NADH + H(+). Involved in the oxidation of myo-inositol (MI) to 2-keto-myo-inositol (2KMI or 2-inosose). The chain is Inositol 2-dehydrogenase 4 from Saccharopolyspora erythraea (strain ATCC 11635 / DSM 40517 / JCM 4748 / NBRC 13426 / NCIMB 8594 / NRRL 2338).